The primary structure comprises 887 residues: Microsomal triglyceride transfer protein large subunit (887 aa).

A signal peptide spans 1–11 (FLCFISSYSAS). Positions 21-655 (LNNDRLYKLT…YIEKTPLHGI (635 aa)) constitute a Vitellogenin domain. An intrachain disulfide couples Cys-167 to Cys-187.

Heterodimer; heterodimerizes with the protein disulfide isomerase (P4HB/PDI). Interacts with APOB. Interacts with PRAP1.

It is found in the endoplasmic reticulum. The protein resides in the golgi apparatus. The enzyme catalyses a 1,2-diacyl-sn-glycero-3-phosphocholine(in) = a 1,2-diacyl-sn-glycero-3-phosphocholine(out). It carries out the reaction a 1,2-diacyl-sn-glycero-3-phosphoethanolamine(in) = a 1,2-diacyl-sn-glycero-3-phosphoethanolamine(out). The catalysed reaction is a cholesterol ester(in) = a cholesterol ester(out). It catalyses the reaction a triacyl-sn-glycerol(in) = a triacyl-sn-glycerol(out). In terms of biological role, catalyzes the transport of triglyceride, cholesteryl ester, and phospholipid between phospholipid surfaces. Required for the assembly and secretion of plasma lipoproteins that contain apolipoprotein B. May be involved in regulating cholesteryl ester biosynthesis in cells that produce lipoproteins. The chain is Microsomal triglyceride transfer protein large subunit (MTTP) from Bos taurus (Bovine).